The following is a 215-amino-acid chain: Large ribosomal subunit protein uL3 (215 aa).

The segment at 136 to 155 (GVSISHRSHGSTGQRQDPGK) is disordered. An N5-methylglutamine modification is found at glutamine 151.

Belongs to the universal ribosomal protein uL3 family. In terms of assembly, part of the 50S ribosomal subunit. Forms a cluster with proteins L14 and L19. Methylated by PrmB.

One of the primary rRNA binding proteins, it binds directly near the 3'-end of the 23S rRNA, where it nucleates assembly of the 50S subunit. The sequence is that of Large ribosomal subunit protein uL3 from Rickettsia conorii (strain ATCC VR-613 / Malish 7).